The primary structure comprises 373 residues: tRNA-specific 2-thiouridylase MnmA (373 aa).

Residues 12–19 and M38 contribute to the ATP site; that span reads GMSGGVDS. An interaction with target base in tRNA region spans residues 98–100; it reads NPD. Catalysis depends on C103, which acts as the Nucleophile. Cysteines 103 and 200 form a disulfide. Position 127 (G127) interacts with ATP. An interaction with tRNA region spans residues 150–152; sequence KDQ. C200 functions as the Cysteine persulfide intermediate in the catalytic mechanism. Residues 312–313 form an interaction with tRNA region; it reads RY.

The protein belongs to the MnmA/TRMU family.

The protein localises to the cytoplasm. The catalysed reaction is S-sulfanyl-L-cysteinyl-[protein] + uridine(34) in tRNA + AH2 + ATP = 2-thiouridine(34) in tRNA + L-cysteinyl-[protein] + A + AMP + diphosphate + H(+). Catalyzes the 2-thiolation of uridine at the wobble position (U34) of tRNA, leading to the formation of s(2)U34. In Streptococcus pyogenes serotype M12 (strain MGAS2096), this protein is tRNA-specific 2-thiouridylase MnmA.